The sequence spans 259 residues: Small ribosomal subunit protein eS4 (259 aa).

Residues 41-100 (LPLSLFLRNRLKYALNYTEAKKILTQRVVRVDGKVRTCHKFPTGFMDVVAIERTNEYFRM) form the S4 RNA-binding domain.

It belongs to the eukaryotic ribosomal protein eS4 family.

The protein is Small ribosomal subunit protein eS4 (rps-4) of Caenorhabditis elegans.